The following is a 449-amino-acid chain: Phosphoglucosamine mutase (449 aa).

S100 serves as the catalytic Phosphoserine intermediate. Mg(2+) contacts are provided by S100, D241, D243, and D245. Phosphoserine is present on S100.

Belongs to the phosphohexose mutase family. Mg(2+) is required as a cofactor. In terms of processing, activated by phosphorylation.

It carries out the reaction alpha-D-glucosamine 1-phosphate = D-glucosamine 6-phosphate. Catalyzes the conversion of glucosamine-6-phosphate to glucosamine-1-phosphate. This chain is Phosphoglucosamine mutase, found in Caldicellulosiruptor bescii (strain ATCC BAA-1888 / DSM 6725 / KCTC 15123 / Z-1320) (Anaerocellum thermophilum).